Consider the following 117-residue polypeptide: Ig heavy chain V region 1-62-3 (117 aa).

An N-terminal signal peptide occupies residues 1 to 19 (MGWSCIMLFLAATATGVHF). The tract at residues 20 to 49 (QVQLQQPGAELVKPGASVKLSSKASGYTFT) is framework-1. Residues 50–54 (SYWMH) form a complementarity-determining-1 region. Residues 55–68 (WVKQRPGRGLEWIG) form a framework-2 region. Residues 69–85 (RIDPNSGGTKYNEKFKS) are complementarity-determining-2. The interval 86–117 (KATLTVDKPSSTAYMQLSSLTSEDSAVYYCAR) is framework-3.

The protein is Ig heavy chain V region 1-62-3 (Ighv1-62-3) of Mus musculus (Mouse).